We begin with the raw amino-acid sequence, 96 residues long: Small ribosomal subunit protein bS6 (96 aa).

This sequence belongs to the bacterial ribosomal protein bS6 family.

In terms of biological role, binds together with bS18 to 16S ribosomal RNA. This is Small ribosomal subunit protein bS6 from Cutibacterium acnes (strain DSM 16379 / KPA171202) (Propionibacterium acnes).